An 833-amino-acid polypeptide reads, in one-letter code: MTFYDHTAIEPKWQAFWADNHTFKTGTDASKPKFYALDMFPYPSGAGLHVGHPEGYTATDILSRFKRAQGHNVLHPMGWDAFGLPAEQYAMDTGNDPAEFTAENIANFKRQINALGFSYDWDREVNTTDPNYYKWTQWIFTKLYEKGLAYEAEVPVNWVEELGTAIANEEVLPDGTSERGGYPVVRKPMRQWMLKITAYAERLLEDLEEVDWPESIKDMQRNWIGKSTGANVTFKVKDTDKDFTVFTTRPDTLFGATYAVLAPEHALVDAITTADQAEAVADYKRQASLKSDLARTDLAKEKTGVWTGSYAINPVNGKEMPVWIADYVLASYGTGAIMAVPAHDERDWEFAKQFNLDIIPVLEGGNVEEAAFTEDGLHINSGFLDGLDKASAIAKMVEWLEAEGVGNEKVTYRLRDWLFSRQRYWGEPIPIIHWEDGTSTAVPESELPLVLPVTKDIRPSGTGESPLANVTDWLEVTREDGVKGRRETNTMPQWAGSSWYYLRYIDPHNTEKLADEELLKQWLPVDIYVGGAEHAVLHLLYARFWHKVLYDLGVVPTKEPFQKLFNQGMILGTSYRDSRGALVATDKVEKRDGSFFHVETGEELEQAPAKMSKSLKNVVNPDDVVEQYGADTLRVYEMFMGPLDASIAWSEEGLEGSRKFLDRVYRLITTKEITEENSGALDKVYNETVKAVTEQVDQMKFNTAIAQLMVFVNAANKEDKLFSDYAKGFVQLIAPFAPHLGEELWQALTASGESISYVPWPSYDESKLVENDVEIVVQIKGKVKAKLVVAKDLSREELQEVALANEKVQAEIAGKDIIKVIAVPNKLVNIVIK.

The 'HIGH' region motif lies at 41 to 52 (PYPSGAGLHVGH). The 'KMSKS' region signature appears at 610–614 (KMSKS). Lys-613 contacts ATP.

Belongs to the class-I aminoacyl-tRNA synthetase family.

Its subcellular location is the cytoplasm. The enzyme catalyses tRNA(Leu) + L-leucine + ATP = L-leucyl-tRNA(Leu) + AMP + diphosphate. The protein is Leucine--tRNA ligase of Streptococcus pyogenes serotype M2 (strain MGAS10270).